The chain runs to 476 residues: 3-isopropylmalate dehydratase large subunit (476 aa).

Residues Cys-357, Cys-417, and Cys-420 each contribute to the [4Fe-4S] cluster site.

It belongs to the aconitase/IPM isomerase family. LeuC type 1 subfamily. Heterodimer of LeuC and LeuD. [4Fe-4S] cluster serves as cofactor.

The enzyme catalyses (2R,3S)-3-isopropylmalate = (2S)-2-isopropylmalate. Its pathway is amino-acid biosynthesis; L-leucine biosynthesis; L-leucine from 3-methyl-2-oxobutanoate: step 2/4. Its function is as follows. Catalyzes the isomerization between 2-isopropylmalate and 3-isopropylmalate, via the formation of 2-isopropylmaleate. This is 3-isopropylmalate dehydratase large subunit from Mycolicibacterium paratuberculosis (strain ATCC BAA-968 / K-10) (Mycobacterium paratuberculosis).